The following is a 208-amino-acid chain: UPF0323 lipoprotein HH_0014 (208 aa).

Residues Met-1–Ala-26 form the signal peptide. Residue Cys-27 is the site of N-palmitoyl cysteine attachment. The S-diacylglycerol cysteine moiety is linked to residue Cys-27. Residues Ala-148–Ser-208 form a disordered region. 2 stretches are compositionally biased toward low complexity: residues Ser-169 to Ser-185 and Ser-193 to Ser-208.

It belongs to the UPF0323 family.

The protein resides in the cell membrane. In Helicobacter hepaticus (strain ATCC 51449 / 3B1), this protein is UPF0323 lipoprotein HH_0014.